Reading from the N-terminus, the 249-residue chain is UDP-2,3-diacylglucosamine hydrolase (249 aa).

Mn(2+) contacts are provided by Asp7, His9, Asp40, Asn78, and His113. 78–79 serves as a coordination point for substrate; sequence NR. 5 residues coordinate substrate: Asp121, Ser159, Thr163, Lys166, and His194. Positions 194 and 196 each coordinate Mn(2+).

The protein belongs to the LpxH family. Requires Mn(2+) as cofactor.

It localises to the cell inner membrane. It carries out the reaction UDP-2-N,3-O-bis[(3R)-3-hydroxytetradecanoyl]-alpha-D-glucosamine + H2O = 2-N,3-O-bis[(3R)-3-hydroxytetradecanoyl]-alpha-D-glucosaminyl 1-phosphate + UMP + 2 H(+). Its pathway is glycolipid biosynthesis; lipid IV(A) biosynthesis; lipid IV(A) from (3R)-3-hydroxytetradecanoyl-[acyl-carrier-protein] and UDP-N-acetyl-alpha-D-glucosamine: step 4/6. Hydrolyzes the pyrophosphate bond of UDP-2,3-diacylglucosamine to yield 2,3-diacylglucosamine 1-phosphate (lipid X) and UMP by catalyzing the attack of water at the alpha-P atom. Involved in the biosynthesis of lipid A, a phosphorylated glycolipid that anchors the lipopolysaccharide to the outer membrane of the cell. The sequence is that of UDP-2,3-diacylglucosamine hydrolase from Pseudomonas fluorescens (strain SBW25).